Reading from the N-terminus, the 61-residue chain is Small ribosomal subunit protein uS14B (61 aa).

4 residues coordinate Zn(2+): Cys24, Cys27, Cys40, and Cys43.

Belongs to the universal ribosomal protein uS14 family. Zinc-binding uS14 subfamily. In terms of assembly, part of the 30S ribosomal subunit. Contacts proteins S3 and S10. Zn(2+) is required as a cofactor.

Functionally, binds 16S rRNA, required for the assembly of 30S particles and may also be responsible for determining the conformation of the 16S rRNA at the A site. The polypeptide is Small ribosomal subunit protein uS14B (Cutibacterium acnes (strain DSM 16379 / KPA171202) (Propionibacterium acnes)).